A 67-amino-acid polypeptide reads, in one-letter code: Prokaryotic ubiquitin-like protein Pup (67 aa).

Residues 1 to 36 show a composition bias toward low complexity; it reads MPQQFEQPQAQQAVTQEDDALATTQAATQTESTDQA. The segment at 1-38 is disordered; the sequence is MPQQFEQPQAQQAVTQEDDALATTQAATQTESTDQADV. The ARC ATPase binding stretch occupies residues 23-61; the sequence is TTQAATQTESTDQADVLDDILDDIESTLETNAEEYVNSF. Residue glutamate 67 forms an Isoglutamyl lysine isopeptide (Glu-Lys) (interchain with K-? in acceptor proteins) linkage.

This sequence belongs to the prokaryotic ubiquitin-like protein family. Strongly interacts with the proteasome-associated ATPase ARC through a hydrophobic interface; the interacting region of Pup lies in its C-terminal half. There is one Pup binding site per ARC hexamer ring.

It participates in protein degradation; proteasomal Pup-dependent pathway. In terms of biological role, protein modifier that is covalently attached to lysine residues of substrate proteins, thereby targeting them for proteasomal degradation. The tagging system is termed pupylation. In Bifidobacterium longum subsp. infantis (strain ATCC 15697 / DSM 20088 / JCM 1222 / NCTC 11817 / S12), this protein is Prokaryotic ubiquitin-like protein Pup.